We begin with the raw amino-acid sequence, 247 residues long: Uridylate kinase (247 aa).

18 to 21 (KLSG) contributes to the ATP binding site. Position 60 (G60) interacts with UMP. Residues G61 and R65 each contribute to the ATP site. UMP-binding positions include D80 and 141–148 (TGNPFFTT). Positions 168, 174, and 177 each coordinate ATP.

Belongs to the UMP kinase family. Homohexamer.

It localises to the cytoplasm. It carries out the reaction UMP + ATP = UDP + ADP. Its pathway is pyrimidine metabolism; CTP biosynthesis via de novo pathway; UDP from UMP (UMPK route): step 1/1. With respect to regulation, inhibited by UTP. Functionally, catalyzes the reversible phosphorylation of UMP to UDP. The sequence is that of Uridylate kinase from Pseudomonas fluorescens (strain ATCC BAA-477 / NRRL B-23932 / Pf-5).